The sequence spans 313 residues: Protein-methionine-sulfoxide reductase catalytic subunit MsrP (313 aa).

The tat-type signal signal peptide spans 1-44 (MARWRPDMAEREATPEALYLRRREFLALGAAGAVGLLVARGARA). Mo-molybdopterin is bound by residues Asn-76, 79 to 80 (YE), Cys-134, Thr-169, Asn-217, Arg-222, and 233 to 235 (GAK).

This sequence belongs to the MsrP family. Heterodimer of a catalytic subunit (MsrP) and a heme-binding subunit (MsrQ). The cofactor is Mo-molybdopterin. Post-translationally, predicted to be exported by the Tat system. The position of the signal peptide cleavage has not been experimentally proven.

It localises to the periplasm. It catalyses the reaction L-methionyl-[protein] + a quinone + H2O = L-methionyl-(S)-S-oxide-[protein] + a quinol. The catalysed reaction is L-methionyl-[protein] + a quinone + H2O = L-methionyl-(R)-S-oxide-[protein] + a quinol. In terms of biological role, part of the MsrPQ system that repairs oxidized periplasmic proteins containing methionine sulfoxide residues (Met-O), using respiratory chain electrons. Thus protects these proteins from oxidative-stress damage caused by reactive species of oxygen and chlorine generated by the host defense mechanisms. MsrPQ is essential for the maintenance of envelope integrity under bleach stress, rescuing a wide series of structurally unrelated periplasmic proteins from methionine oxidation. The catalytic subunit MsrP is non-stereospecific, being able to reduce both (R-) and (S-) diastereoisomers of methionine sulfoxide. The protein is Protein-methionine-sulfoxide reductase catalytic subunit MsrP of Anaeromyxobacter sp. (strain K).